The chain runs to 90 residues: Co-chaperonin GroES (90 aa).

This sequence belongs to the GroES chaperonin family. In terms of assembly, heptamer of 7 subunits arranged in a ring. Interacts with the chaperonin GroEL.

Its subcellular location is the cytoplasm. Together with the chaperonin GroEL, plays an essential role in assisting protein folding. The GroEL-GroES system forms a nano-cage that allows encapsulation of the non-native substrate proteins and provides a physical environment optimized to promote and accelerate protein folding. GroES binds to the apical surface of the GroEL ring, thereby capping the opening of the GroEL channel. In Borreliella burgdorferi (strain ATCC 35210 / DSM 4680 / CIP 102532 / B31) (Borrelia burgdorferi), this protein is Co-chaperonin GroES.